A 196-amino-acid chain; its full sequence is Na(+)-translocating ferredoxin:NAD(+) oxidoreductase complex subunit E (196 aa).

5 helical membrane-spanning segments follow: residues methionine 38–leucine 58, isoleucine 68–alanine 88, alanine 92–alanine 112, phenylalanine 127–isoleucine 147, and valine 169–isoleucine 189.

The protein belongs to the NqrDE/RnfAE family. As to quaternary structure, the complex is composed of six subunits: RnfA, RnfB, RnfC, RnfD, RnfE and RnfG.

The protein resides in the cell membrane. The catalysed reaction is 2 reduced [2Fe-2S]-[ferredoxin] + Na(+)(in) + NAD(+) + H(+) = 2 oxidized [2Fe-2S]-[ferredoxin] + Na(+)(out) + NADH. Its function is as follows. Part of a membrane-bound complex that couples electron transfer with translocation of ions across the membrane. Couples electron transfer from reduced ferredoxin to NAD(+) with electrogenic movement of Na(+) out of the cell. Involved in caffeate respiration. The chain is Na(+)-translocating ferredoxin:NAD(+) oxidoreductase complex subunit E from Acetobacterium woodii (strain ATCC 29683 / DSM 1030 / JCM 2381 / KCTC 1655 / WB1).